The following is a 689-amino-acid chain: Elongation factor G (689 aa).

The region spanning 8–282 (LNTRNIGIMA…AVVDYLPSPL (275 aa)) is the tr-type G domain. Residues 17 to 24 (AHIDAGKT), 81 to 85 (DTPGH), and 135 to 138 (NKMD) contribute to the GTP site.

It belongs to the TRAFAC class translation factor GTPase superfamily. Classic translation factor GTPase family. EF-G/EF-2 subfamily.

The protein localises to the cytoplasm. In terms of biological role, catalyzes the GTP-dependent ribosomal translocation step during translation elongation. During this step, the ribosome changes from the pre-translocational (PRE) to the post-translocational (POST) state as the newly formed A-site-bound peptidyl-tRNA and P-site-bound deacylated tRNA move to the P and E sites, respectively. Catalyzes the coordinated movement of the two tRNA molecules, the mRNA and conformational changes in the ribosome. This Mycoplasma mycoides subsp. mycoides SC (strain CCUG 32753 / NCTC 10114 / PG1) protein is Elongation factor G.